The sequence spans 670 residues: Probable beta-glucosidase N (670 aa).

The first 21 residues, 1–21 (MHSNILPVLTSVATLLGLVQG), serve as a signal peptide directing secretion. A glycan (N-linked (GlcNAc...) asparagine) is linked at asparagine 51. A disordered region spans residues 65-87 (FEPSDGVRSVQGSGKDYDNPAMR). A glycan (N-linked (GlcNAc...) asparagine) is linked at asparagine 141. Aspartate 152 is a catalytic residue. 4 N-linked (GlcNAc...) asparagine glycosylation sites follow: asparagine 184, asparagine 248, asparagine 330, and asparagine 417.

It belongs to the glycosyl hydrolase 3 family.

It localises to the secreted. It carries out the reaction Hydrolysis of terminal, non-reducing beta-D-glucosyl residues with release of beta-D-glucose.. It functions in the pathway glycan metabolism; cellulose degradation. Functionally, beta-glucosidases are one of a number of cellulolytic enzymes involved in the degradation of cellulosic biomass. Catalyzes the last step releasing glucose from the inhibitory cellobiose. The polypeptide is Probable beta-glucosidase N (bglN) (Emericella nidulans (strain FGSC A4 / ATCC 38163 / CBS 112.46 / NRRL 194 / M139) (Aspergillus nidulans)).